A 161-amino-acid polypeptide reads, in one-letter code: Globin CTT-VIIB-5/CTT-VIIB-9 (161 aa).

Positions 1–16 (MKFFAVLALCIVGAIA) are cleaved as a signal peptide. In terms of domain architecture, Globin spans 18-161 (PLTADEASLV…NTFAIVVPRL (144 aa)). 2 residues coordinate heme b: histidine 76 and histidine 111.

It belongs to the globin family. As to quaternary structure, homodimer.

The polypeptide is Globin CTT-VIIB-5/CTT-VIIB-9 (CTT-7B5) (Chironomus thummi thummi (Midge)).